The sequence spans 748 residues: Acyl-coenzyme A oxidase (748 aa).

It belongs to the acyl-CoA oxidase family. Homooctamer. FAD serves as cofactor.

The protein localises to the peroxisome. The catalysed reaction is a 2,3-saturated acyl-CoA + O2 = a (2E)-enoyl-CoA + H2O2. It functions in the pathway lipid metabolism; peroxisomal fatty acid beta-oxidation. This is Acyl-coenzyme A oxidase (POX1) from Saccharomyces cerevisiae (strain ATCC 204508 / S288c) (Baker's yeast).